The chain runs to 597 residues: Apurinic-apyrimidinic endonuclease 1 (597 aa).

The segment covering 232–246 (YNNDTKYLSNPKGVT) has biased composition (polar residues). Residues 232–296 (YNNDTKYLSN…IPPIPKNTED (65 aa)) form a disordered region. A compositionally biased stretch (low complexity) spans 265–274 (NNNNNNNNNK). Histidine 380, histidine 420, glutamate 456, aspartate 490, histidine 493, histidine 527, aspartate 540, histidine 542, and glutamate 572 together coordinate Zn(2+). Histidine 493 provides a ligand contact to Mn(2+). 2 residues coordinate Mn(2+): aspartate 540 and histidine 542.

The protein belongs to the AP endonuclease 2 family. The cofactor is Zn(2+). Requires Mn(2+) as cofactor. In terms of processing, may be proteolytically cleaved into a 59 kDa form.

It is found in the mitochondrion. With respect to regulation, apurinic/apyrimidinic (AP) endonuclease activity is enhanced with increasing concentrations of Mn(2+), while Zn(2+) initially enhances activity but subsequently inhibits activity in a concentration-dependent manner. Co(2+) inhibits apurinic/apyrimidinic (AP) endonuclease activity at concentrations greater than 2.5 mM. Its function is as follows. Plays a role in mitochondrial DNA base excision repair (BER) pathway induced by oxidative stress. Has apurinic/apyrimidinic (AP) endonuclease activity towards double-stranded DNA (dsDNA) with a preference for C as opposite base. Has 3'-phosphatase activity; removes 3'-phosphate from blunt-end, recessed, and gapped DNA templates and thus, removes 3'-blocks for DNA polymerase activity during BER. Lacks 3'-5' exonuclease activity and does not cleave damaged bases by nucleotide incision repair (NIR). The chain is Apurinic-apyrimidinic endonuclease 1 from Plasmodium falciparum (isolate 3D7).